Consider the following 170-residue polypeptide: MSLHTENSQPSIGVYPGTFDPITNGHIDIIERALALFDTVIVAIAVNGQKQPLFSGEERKEMIEKCFEKEKGRIIVKIVPSGLLVNFAVEQGARAIIRGLRAVSDFDYEFQLALMNRKLVREVESIFLMTAFRWIYISSSLIKDVSKNGGDISDLVPKHVERLLEEKYRP.

Threonine 18 contributes to the substrate binding site. Residues 18–19 (TF) and histidine 26 contribute to the ATP site. Residues lysine 50, leucine 84, and arginine 98 each coordinate substrate. ATP is bound by residues 99 to 101 (GLR), glutamate 109, and 134 to 140 (WIYISSS).

This sequence belongs to the bacterial CoaD family. As to quaternary structure, homohexamer. Requires Mg(2+) as cofactor.

It is found in the cytoplasm. The enzyme catalyses (R)-4'-phosphopantetheine + ATP + H(+) = 3'-dephospho-CoA + diphosphate. The protein operates within cofactor biosynthesis; coenzyme A biosynthesis; CoA from (R)-pantothenate: step 4/5. Its function is as follows. Reversibly transfers an adenylyl group from ATP to 4'-phosphopantetheine, yielding dephospho-CoA (dPCoA) and pyrophosphate. In Desulfotalea psychrophila (strain LSv54 / DSM 12343), this protein is Phosphopantetheine adenylyltransferase.